The primary structure comprises 216 residues: Protein-L-isoaspartate O-methyltransferase (216 aa).

Ser-61 is an active-site residue.

Belongs to the methyltransferase superfamily. L-isoaspartyl/D-aspartyl protein methyltransferase family.

Its subcellular location is the cytoplasm. The enzyme catalyses [protein]-L-isoaspartate + S-adenosyl-L-methionine = [protein]-L-isoaspartate alpha-methyl ester + S-adenosyl-L-homocysteine. In terms of biological role, catalyzes the methyl esterification of L-isoaspartyl residues in peptides and proteins that result from spontaneous decomposition of normal L-aspartyl and L-asparaginyl residues. It plays a role in the repair and/or degradation of damaged proteins. This is Protein-L-isoaspartate O-methyltransferase (pcm) from Pyrococcus abyssi (strain GE5 / Orsay).